We begin with the raw amino-acid sequence, 87 residues long: Citrate lyase acyl carrier protein (87 aa).

Serine 14 is modified (O-(phosphoribosyl dephospho-coenzyme A)serine).

This sequence belongs to the CitD family. In terms of assembly, oligomer with a subunit composition of (alpha,beta,gamma)6.

It localises to the cytoplasm. In terms of biological role, covalent carrier of the coenzyme of citrate lyase. In Treponema denticola (strain ATCC 35405 / DSM 14222 / CIP 103919 / JCM 8153 / KCTC 15104), this protein is Citrate lyase acyl carrier protein.